Here is a 336-residue protein sequence, read N- to C-terminus: Probable deoxyhypusine synthase (336 aa).

The active-site Nucleophile is the Lys-308.

This sequence belongs to the deoxyhypusine synthase family. It depends on NAD(+) as a cofactor.

The enzyme catalyses [eIF5A protein]-L-lysine + spermidine = [eIF5A protein]-deoxyhypusine + propane-1,3-diamine. It participates in protein modification; eIF5A hypusination. Functionally, catalyzes the NAD-dependent oxidative cleavage of spermidine and the subsequent transfer of the butylamine moiety of spermidine to the epsilon-amino group of a specific lysine residue of the eIF-5A precursor protein to form the intermediate deoxyhypusine residue. This is Probable deoxyhypusine synthase from Thermococcus gammatolerans (strain DSM 15229 / JCM 11827 / EJ3).